A 110-amino-acid polypeptide reads, in one-letter code: Probable protein L3 (110 aa).

This chain is Probable protein L3, found in Human papillomavirus type 5b.